Consider the following 403-residue polypeptide: LIM/homeobox protein Lhx1 (403 aa).

LIM zinc-binding domains follow at residues 4–54 (CAGC…CKND) and 63–117 (CAGC…CKED). Residues 131–147 (ISVTGSDPSLSPESQDP) are compositionally biased toward polar residues. 2 disordered regions span residues 131–185 (ISVT…PRTT) and 318–366 (PAGT…SMHS). The span at 150 to 166 (DDAKDSESANVSDKEAG) shows a compositional bias: basic and acidic residues. The homeobox DNA-binding region spans 179-238 (RRGPRTTIKAKQLETLKAAFAATPKPTRHIREQLAQETGLNMRVIQVWFQNRRSKERRMK).

As to quaternary structure, interacts with ldb1 via the tandem LIM domains. Both LIM domains are required for optimal binding and binding relieves the inhibitory effect of the LIM domains and activates lhx1. Binding to ldb1 also prevents degradation of ldb1 by rnf12. The stoichiometry of lhx1 and ldb1 is important for their function and an excess of ldb1 can inhibit lhx1 function. Interacts with the N-terminal region of rnf12 by a homeobox-dependent mechanism. As to expression, exhibits a biphasic expression pattern. Initially localized to the Spemann organizer region of gastrulae, leading to expression in prechordal mesoderm and notochord. In the second phase, expressed in the lateral mesoderm and neural plate, eventually concentrating in the pronephros and the CNS. Expressed in the pronephros primordium by late gastrula (stage 12.5) and becomes restricted to the tips of the tubules and ducts as kidney development progresses. In the CNS, becomes progressively recognizable in anatomically distinct structures during larval development. Within the forebrain, shows almost identical expression to lhx5 in the diencephalon, being expressed in alternating stripes to lhx2 and lhx9. Expressed in the diencephalic pretectum within prosomere 1, hypothalamus, ventral thalamus and zona limitans intrathalamica. In the telencephalon, the expression pattern is distinct from lhx5, being localized in the pallium and subpallium. Also expressed in the ventral territories of midbrain (mesencephalon) and hindbrain (rhombencephalon), being expressed in the mesencephalic tegmentum and hindbrain reticular formation. Also shows intense expression in the cerebellum including Purkinje cells.

It is found in the nucleus. In terms of biological role, involved in the establishment of the body plan via the Spemann organizer during gastrulation. Transcriptional activator required to induce organizer gene expression downstream of siamois. Promotes head formation by binding to 5'-TAAT'-3' elements in the promoters of head organizer genes cer1 and gsc to stimulate expression. Binds as a complex with siamois and mix-A/mix.1 to the cer1 promoter, and with ldb1 and otx2 to the gsc promoter. Also involved in neural induction via the organizer, including a role in notochord formation. Acts synergistically with ldb1 and ssbp in subsequent axis formation. Involved in kidney development, acting synergistically with pax8 to establish the pronephric primordium in late gastrulae/early neurulae and with pax2 during pronephric morphogenesis in tailbud stages. Has a later role in mediating the activity of inhibitors of ventralization. This chain is LIM/homeobox protein Lhx1 (lhx1), found in Xenopus laevis (African clawed frog).